The following is a 127-amino-acid chain: Large ribosomal subunit protein bL19 (127 aa).

Belongs to the bacterial ribosomal protein bL19 family.

Its function is as follows. This protein is located at the 30S-50S ribosomal subunit interface and may play a role in the structure and function of the aminoacyl-tRNA binding site. The protein is Large ribosomal subunit protein bL19 of Myxococcus xanthus (strain DK1622).